We begin with the raw amino-acid sequence, 500 residues long: MEEFQGYLELDRYQQHDFLHPLIFREYIYALAHDHGLNRSILLGYDNKSSLLIIKRLISRMYKQNRFIISANDSNQKKNLGYNKNLYSQIISEGFAVIVEIPFSLRLVSSATEIVKSYNLRSIHSIFPFLEDKFPQLNYVSDVLIPYPIHLEILVQTLRYWVKDASSLHLLRLFLHEYYNWNSLITSNNFFFFSKSNPRLFLLLYNSHVCEYEFILLFLRNQSSHLQLISSGIFFERIHFYEKIKYPVEEVFANDFPAAILWFFKDPFMHYVRYQGKSILASKDTPLLMNKWKYYLVNLWQCHSYVWSQPGRIYINKLSKHSLDFLGYFSSIRPNLSVVRSQMLENSFITDNAMKKLDTLVPIIPLIGSLAKVKFCNALGHPISKSTWADSSDFDIIDRFLRIFRNLSHYYSGSSRKKSLYRIKYILRLSCVKTLARKHKSTVRTFLKRLGSKLLEEFFTEEEQILSLIFPRASYTLKKFYSGRIWYLDIFCINDLINHE.

It belongs to the intron maturase 2 family. MatK subfamily.

The protein resides in the plastid. It localises to the chloroplast. Usually encoded in the trnK tRNA gene intron. Probably assists in splicing its own and other chloroplast group II introns. This Prunus laurocerasus (Cherry laurel) protein is Maturase K.